The primary structure comprises 757 residues: Xylosyl- and glucuronyltransferase LARGE1 (757 aa).

Residues 1-10 (MLGMCRGRRK) are Cytoplasmic-facing. Residues 11–31 (FVAASLALIFIPALTWLYLSS) traverse the membrane as a helical; Signal-anchor for type II membrane protein segment. The Lumenal segment spans residues 32–757 (ANITVKPLPL…LKYMTVDNNS (726 aa)). Residues 50–82 (AVVGAAAEHQSLELRLRDVEEHNNALRREISRT) are a coiled coil. Residues 76–127 (RREISRTPRVPTHSSHPSSSRHGNQLHTHSTEEGTGDSEAKKGAAAGNSSDC) are disordered. The segment covering 82-97 (TPRVPTHSSHPSSSRH) has biased composition (low complexity). N-linked (GlcNAc...) asparagine glycans are attached at residues Asn-123 and Asn-149. Positions 139–414 (IHIAIVCAGY…FLEYDGNLLR (276 aa)) are xylosyltransferase activity. Mn(2+)-binding residues include Asp-243 and Asp-245. Asn-273 carries an N-linked (GlcNAc...) asparagine glycan. Positions 415 to 757 (RELFGCPSET…LKYMTVDNNS (343 aa)) are glucuronyltransferase activity. Asp-564 and Asp-566 together coordinate Mn(2+). An N-linked (GlcNAc...) asparagine glycan is attached at Asn-738.

It in the C-terminal section; belongs to the glycosyltransferase 49 family. This sequence in the N-terminal section; belongs to the glycosyltransferase 8 family. It depends on Mn(2+) as a cofactor.

The protein localises to the golgi apparatus membrane. It carries out the reaction 3-O-[beta-D-GlcA-(1-&gt;3)-beta-D-Xyl-(1-&gt;4)-Rib-ol-P-Rib-ol-P-3-beta-D-GalNAc-(1-&gt;3)-beta-D-GlcNAc-(1-&gt;4)-(O-6-P-alpha-D-Man)]-Thr-[protein] + UDP-alpha-D-xylose = 3-O-[alpha-D-Xyl-(1-&gt;3)-beta-D-GlcA-(1-&gt;4)-beta-D-Xyl-(1-&gt;4)-Rib-ol-P-Rib-ol-P-3-beta-D-GalNAc-(1-&gt;3)-beta-D-GlcNAc-(1-&gt;4)-(O-6-P-alpha-D-Man)]-Thr-[protein] + UDP + H(+). It catalyses the reaction 3-O-{(1-&gt;[3)-alpha-D-Xyl-(1-&gt;3)-beta-D-GlcA-(1-&gt;](n)-4)-beta-D-Xyl-(1-&gt;4)-Rib-ol-P-Rib-ol-P-3-beta-D-GalNAc-(1-&gt;3)-beta-D-GlcNAc-(1-&gt;4)-O-6-P-alpha-D-Man}-L-Thr-[protein] + UDP-alpha-D-glucuronate = 3-O-{beta-D-GlcA-(1-&gt;[3)-alpha-D-Xyl-(1-&gt;3)-beta-D-GlcA-(1-&gt;](n)-4)-beta-D-Xyl-(1-&gt;4)-Rib-ol-P-Rib-ol-P-3-beta-D-GalNAc-(1-&gt;3)-beta-D-GlcNAc-(1-&gt;4)-O-6-P-alpha-D-Man}-L-Thr-[protein] + UDP + H(+). The enzyme catalyses 3-O-{beta-D-GlcA-(1-&gt;[3)-alpha-D-Xyl-(1-&gt;3)-beta-D-GlcA-(1-&gt;](n)-4)-beta-D-Xyl-(1-&gt;4)-Rib-ol-P-Rib-ol-P-3-beta-D-GalNAc-(1-&gt;3)-beta-D-GlcNAc-(1-&gt;4)-O-6-P-alpha-D-Man}-L-Thr-[protein] + UDP-alpha-D-xylose = 3-O-{(1-&gt;[3)-alpha-D-Xyl-(1-&gt;3)-beta-D-GlcA-(1-&gt;](n+1)-4)-beta-D-Xyl-(1-&gt;4)-Rib-ol-P-Rib-ol-P-3-beta-D-GalNAc-(1-&gt;3)-beta-D-GlcNAc-(1-&gt;4)-O-6-P-alpha-D-Man}-L-Thr-[protein] + UDP + H(+). It participates in protein modification; protein glycosylation. Bifunctional glycosyltransferase with both alpha-1,3-xylosyltransferase and beta-1,3-glucuronyltransferase activities involved in the maturation of alpha-dystroglycan (DAG1) by glycosylation leading to DAG1 binding to laminin G-like domain-containing extracellular proteins with high affinity. Elongates the glucuronyl-beta-1,4-xylose-beta disaccharide primer structure initiated by B4GAT1 by adding repeating units [-3-Xylose-alpha-1,3-GlcA-beta-1-] to produce a heteropolysaccharide. Requires the phosphorylation of core M3 (O-mannosyl trisaccharide) by POMK to elongate the glucuronyl-beta-1,4-xylose-beta disaccharide primer. Plays a key role in skeletal muscle function and regeneration. The chain is Xylosyl- and glucuronyltransferase LARGE1 from Danio rerio (Zebrafish).